The following is a 388-amino-acid chain: Succinate--CoA ligase [ADP-forming] subunit beta (388 aa).

In terms of domain architecture, ATP-grasp spans 9–244; the sequence is KEIFRSMGVA…LEEEDPKEIE (236 aa). Residues Lys46, 53-55, Glu99, Cys102, and Glu107 contribute to the ATP site; that span reads GRG. Residues Asn199 and Asp213 each contribute to the Mg(2+) site. Substrate is bound by residues Asn264 and 321–323; that span reads GIM.

Belongs to the succinate/malate CoA ligase beta subunit family. In terms of assembly, heterotetramer of two alpha and two beta subunits. It depends on Mg(2+) as a cofactor.

It catalyses the reaction succinate + ATP + CoA = succinyl-CoA + ADP + phosphate. It carries out the reaction GTP + succinate + CoA = succinyl-CoA + GDP + phosphate. It functions in the pathway carbohydrate metabolism; tricarboxylic acid cycle; succinate from succinyl-CoA (ligase route): step 1/1. Its function is as follows. Succinyl-CoA synthetase functions in the citric acid cycle (TCA), coupling the hydrolysis of succinyl-CoA to the synthesis of either ATP or GTP and thus represents the only step of substrate-level phosphorylation in the TCA. The beta subunit provides nucleotide specificity of the enzyme and binds the substrate succinate, while the binding sites for coenzyme A and phosphate are found in the alpha subunit. This is Succinate--CoA ligase [ADP-forming] subunit beta from Staphylococcus aureus (strain bovine RF122 / ET3-1).